Reading from the N-terminus, the 177-residue chain is Large ribosomal subunit protein uL6 (177 aa).

This sequence belongs to the universal ribosomal protein uL6 family. As to quaternary structure, part of the 50S ribosomal subunit.

In terms of biological role, this protein binds to the 23S rRNA, and is important in its secondary structure. It is located near the subunit interface in the base of the L7/L12 stalk, and near the tRNA binding site of the peptidyltransferase center. This chain is Large ribosomal subunit protein uL6, found in Paracidovorax citrulli (strain AAC00-1) (Acidovorax citrulli).